Reading from the N-terminus, the 62-residue chain is Large ribosomal subunit protein bL32 (62 aa).

Basic residues predominate over residues 1 to 16 (MAVPKRKTSPSRRGMR). The interval 1-44 (MAVPKRKTSPSRRGMRRSADALKAPTYVEDKDSGELRRPHHIDL) is disordered. Residues 28–44 (VEDKDSGELRRPHHIDL) are compositionally biased toward basic and acidic residues.

It belongs to the bacterial ribosomal protein bL32 family.

The sequence is that of Large ribosomal subunit protein bL32 from Methylorubrum extorquens (strain CM4 / NCIMB 13688) (Methylobacterium extorquens).